The primary structure comprises 413 residues: Zona pellucida-like domain-containing protein 1 (413 aa).

Positions 1-19 (MEQICLIILLISKALSVGA) are cleaved as a signal peptide. Q20 bears the Pyrrolidone carboxylic acid mark. At 20–370 (QFNGYNCDAN…PVFRMNTVTS (351 aa)) the chain is on the extracellular side. The region spanning 43–320 (YCGVQTITLK…PICGSRKKRD (278 aa)) is the ZP domain. Intrachain disulfides connect C44/C155 and C79/C104. 6 N-linked (GlcNAc...) asparagine glycosylation sites follow: N85, N121, N129, N164, N181, and N194. 2 disulfides stabilise this stretch: C235–C296 and C255–C313. N-linked (GlcNAc...) asparagine glycosylation occurs at N351. Residues 371–391 (ALISGIIILGVMSLCFFILSL) traverse the membrane as a helical segment. At 392–413 (TLLKGKRAPPTILSGARNPAFN) the chain is on the cytoplasmic side.

Post-translationally, proteolytically cleaved before the transmembrane segment to yield the secreted form found in the extracellular matrix of the cupula. N-glycosylated. In terms of tissue distribution, detected in the acellular cupulae of the vestibular organ, and also in support cells adjacent to the cupula (at protein level).

The protein localises to the cytoplasmic vesicle membrane. It is found in the secreted. The protein resides in the extracellular space. Its subcellular location is the extracellular matrix. In terms of biological role, glycoprotein which is a component of the gelatinous extracellular matrix in the cupulae of the vestibular organ. The chain is Zona pellucida-like domain-containing protein 1 from Salmo salar (Atlantic salmon).